A 154-amino-acid polypeptide reads, in one-letter code: Protein phosphatase 1 regulatory subunit 27 (154 aa).

ANK repeat units lie at residues 63-92 (SGLAALHEAVLSGNLECVKLLVKYGADIHQ) and 96-125 (TGWTPLHIACSDGYPDIARYLISLGADRDA).

Interacts with DYSF and PPP1CA.

Functionally, inhibits phosphatase activity of protein phosphatase 1 (PP1) complexes. This is Protein phosphatase 1 regulatory subunit 27 (Ppp1r27) from Mus musculus (Mouse).